A 565-amino-acid polypeptide reads, in one-letter code: Carboxylesterase 1D (565 aa).

The first 18 residues, M1–G18, serve as a signal peptide directing secretion. N79 carries N-linked (GlcNAc...) asparagine glycosylation. C87 and C116 are joined by a disulfide. S221 (acyl-ester intermediate) is an active-site residue. The cysteines at positions 273 and 284 are disulfide-linked. E353 (charge relay system) is an active-site residue. K382 bears the N6-succinyllysine mark. H466 serves as the catalytic Charge relay system. N489 is a glycosylation site (N-linked (GlcNAc...) asparagine). A Prevents secretion from ER motif is present at residues H562–L565.

The protein belongs to the type-B carboxylesterase/lipase family. In terms of assembly, homotrimer. As to expression, highest expression occurs in liver with lower levels in adipose tissue, kidney, heart, intestine, lung, testis and thymus.

It is found in the endoplasmic reticulum lumen. The protein localises to the cytoplasm. Its subcellular location is the cytosol. The protein resides in the lipid droplet. It localises to the microsome. It catalyses the reaction a carboxylic ester + H2O = an alcohol + a carboxylate + H(+). The catalysed reaction is a long-chain fatty acyl ethyl ester + H2O = a long-chain fatty acid + ethanol + H(+). It carries out the reaction all-trans-retinyl hexadecanoate + H2O = all-trans-retinol + hexadecanoate + H(+). In terms of biological role, major lipase in white adipose tissue. Involved in the metabolism of xenobiotics and of natural substrates. Hydrolyzes triacylglycerols and monoacylglycerols, with a preference for monoacylglycerols. The susceptibility of the substrate increases with decreasing acyl chain length of the fatty acid moiety. Catalyzes the synthesis of fatty acid ethyl esters. Hydrolyzes retinyl esters. This is Carboxylesterase 1D from Mus musculus (Mouse).